The following is a 120-amino-acid chain: Large ribosomal subunit protein eL34 (120 aa).

Belongs to the eukaryotic ribosomal protein eL34 family.

The chain is Large ribosomal subunit protein eL34 (RPL34) from Nicotiana tabacum (Common tobacco).